The primary structure comprises 138 residues: Large ribosomal subunit protein uL16c (138 aa).

Residues methionine 1–serine 21 form a disordered region. The segment covering threonine 7–serine 21 has biased composition (basic residues).

This sequence belongs to the universal ribosomal protein uL16 family. In terms of assembly, part of the 50S ribosomal subunit.

It localises to the plastid. The protein localises to the chloroplast. The sequence is that of Large ribosomal subunit protein uL16c from Cycas taitungensis (Prince sago).